Consider the following 255-residue polypeptide: 14-3-3 protein epsilon (255 aa).

Residue methionine 1 is modified to N-acetylmethionine. An N6-acetyllysine; alternate modification is found at lysine 50. Lysine 50 participates in a covalent cross-link: Glycyl lysine isopeptide (Lys-Gly) (interchain with G-Cter in SUMO2); alternate. Serine 65 bears the Phosphoserine mark. 3 positions are modified to N6-acetyllysine: lysine 69, lysine 118, and lysine 123. Phosphotyrosine is present on tyrosine 131. Position 137 is a phosphothreonine (threonine 137). Serine 210 bears the Phosphoserine mark. At threonine 232 the chain carries Phosphothreonine. The segment at 234 to 255 (DMQGDGEEQNKEALQDVEDENQ) is disordered.

Belongs to the 14-3-3 family. Homodimer. Heterodimerizes with YWHAZ. Interacts with PKA-phosphorylated AANAT. Interacts with ABL1 (phosphorylated form); the interaction retains it in the cytoplasm. Interacts with ARHGEF28. Interacts with BEX3. Weakly interacts with CDKN1B. Interacts with the 'Thr-369' phosphorylated form of DAPK2. Interacts with DENND1A. Interacts with GAB2. Interacts with phosphorylated GRB10. Interacts with KSR1. Interacts with NDEL1. Interacts with PI4KB, TBC1D22A and TBC1D22B. Interacts with the phosphorylated (by AKT1) form of SRPK2. Interacts with TIAM2. Interacts with the 'Ser-1134' and 'Ser-1161' phosphorylated form of SOS1. Interacts with ZFP36 (via phosphorylated form). Interacts with SLITRK1. Interacts with HSF1 (via phosphorylated form); this interaction promotes HSF1 sequestration in the cytoplasm in a ERK-dependent manner. Interacts with RIPOR2. Interacts with KLHL22; required for the nuclear localization of KLHL22 upon amino acid starvation. Interacts with CRTC1. Interacts with CRTC2 (probably when phosphorylated at 'Ser-171'). Interacts with CRTC3 (probably when phosphorylated at 'Ser-162' and/or 'Ser-273'). Interacts with ATP2B1 and ATP2B3; this interaction inhibits calcium-transporting ATPase activity. Interacts with MEFV. Interacts with RNF115. Interacts with GPR15; this interaction promotes ER-to-Golgi transport of GPR15.

The protein resides in the nucleus. It localises to the cytoplasm. It is found in the melanosome. Adapter protein implicated in the regulation of a large spectrum of both general and specialized signaling pathways. Binds to a large number of partners, usually by recognition of a phosphoserine or phosphothreonine motif. Binding generally results in the modulation of the activity of the binding partner. Positively regulates phosphorylated protein HSF1 nuclear export to the cytoplasm. This chain is 14-3-3 protein epsilon (Ywhae), found in Rattus norvegicus (Rat).